The following is a 447-amino-acid chain: Tubulin beta-2 chain (447 aa).

GTP-binding residues include Gln11, Glu69, Ser138, Gly142, Thr143, Gly144, Asn204, and Asn226. A Mg(2+)-binding site is contributed by Glu69. Positions 426-447 (QDAGVDEEEEEYEDDAPLEEEV) are disordered. A compositionally biased stretch (acidic residues) spans 429–447 (GVDEEEEEYEDDAPLEEEV).

Belongs to the tubulin family. Dimer of alpha and beta chains. A typical microtubule is a hollow water-filled tube with an outer diameter of 25 nm and an inner diameter of 15 nM. Alpha-beta heterodimers associate head-to-tail to form protofilaments running lengthwise along the microtubule wall with the beta-tubulin subunit facing the microtubule plus end conferring a structural polarity. Microtubules usually have 13 protofilaments but different protofilament numbers can be found in some organisms and specialized cells. It depends on Mg(2+) as a cofactor.

Its subcellular location is the cytoplasm. It is found in the cytoskeleton. Its function is as follows. Tubulin is the major constituent of microtubules, a cylinder consisting of laterally associated linear protofilaments composed of alpha- and beta-tubulin heterodimers. Microtubules grow by the addition of GTP-tubulin dimers to the microtubule end, where a stabilizing cap forms. Below the cap, tubulin dimers are in GDP-bound state, owing to GTPase activity of alpha-tubulin. This Colletotrichum graminicola (Maize anthracnose fungus) protein is Tubulin beta-2 chain (TUB2).